Here is a 148-residue protein sequence, read N- to C-terminus: Large ribosomal subunit protein bL9 (148 aa).

This sequence belongs to the bacterial ribosomal protein bL9 family.

Its function is as follows. Binds to the 23S rRNA. This chain is Large ribosomal subunit protein bL9, found in Pseudomonas fluorescens (strain Pf0-1).